A 287-amino-acid chain; its full sequence is Inorganic pyrophosphatase (287 aa).

Residue T65 is modified to Phosphothreonine. R79 contributes to the diphosphate binding site. Y90 serves as the catalytic Proton donor. D116, D121, and D153 together coordinate Mg(2+). A Glycyl lysine isopeptide (Lys-Gly) (interchain with G-Cter in ubiquitin) cross-link involves residue K239. T251 is modified (phosphothreonine). S266 carries the post-translational modification Phosphoserine. K279 is covalently cross-linked (Glycyl lysine isopeptide (Lys-Gly) (interchain with G-Cter in ubiquitin)). Position 286 is a phosphoserine (S286).

Belongs to the PPase family. In terms of assembly, homodimer. Mg(2+) is required as a cofactor.

It is found in the cytoplasm. The catalysed reaction is diphosphate + H2O = 2 phosphate + H(+). The polypeptide is Inorganic pyrophosphatase (IPP1) (Saccharomyces cerevisiae (strain ATCC 204508 / S288c) (Baker's yeast)).